The primary structure comprises 164 residues: Ribosome maturation factor RimM (164 aa).

In terms of domain architecture, PRC barrel spans 90–161 (EGRYYVADII…EIIIKPVKTW (72 aa)).

This sequence belongs to the RimM family. As to quaternary structure, binds ribosomal protein uS19.

The protein localises to the cytoplasm. In terms of biological role, an accessory protein needed during the final step in the assembly of 30S ribosomal subunit, possibly for assembly of the head region. Essential for efficient processing of 16S rRNA. May be needed both before and after RbfA during the maturation of 16S rRNA. It has affinity for free ribosomal 30S subunits but not for 70S ribosomes. In Clostridium tetani (strain Massachusetts / E88), this protein is Ribosome maturation factor RimM.